Reading from the N-terminus, the 407-residue chain is MKSFFKPLILKKFLWTLLFVFIYVLGSKLTLPFVDVSSIAKLNGDSVTLNYAAALMGGNLRSMSFFSIGLAPWMSSILIWQMFTVSKRLGLNKLSMESQEKRRMLLTLAIALIQSLGLVLNLPLKTVAGVGQGTIVFLDTLILIAGTYFLIWLTDLNSSMGLGGSIMIVMVSMISYIPQDIWLSIQELKISPLILALIGFFSLCFLYLAVLVERAKYRIPINKINIHNRFKKYSYLDIRVNAAGGLPIMYAMTLVSIPQYFLMLLLFFQPNNRLLKEGILSLAMGGIPWFILYLLTIFILAWAFAFINVNSDQIAERMQRSGEYIENLYPGEATRRYIHKTVGYFAFVGALYLVLVAGLPMLLIFLDIRYMRLGMIPGMFMIFIGMVFSIKDEVDTLTLNDRYHSLF.

The next 10 helical transmembrane spans lie at 13–33 (FLWT…TLPF), 65–85 (FFSI…MFTV), 104–124 (MLLT…NLPL), 133–153 (GTIV…LIWL), 158–178 (SSMG…SYIP), 192–212 (PLIL…AVLV), 248–268 (IMYA…LLFF), 287–307 (IPWF…FAFI), 345–365 (FAFV…LLIF), and 370–390 (YMRL…VFSI).

It belongs to the SecY/SEC61-alpha family. SecY2 subfamily. In terms of assembly, may form heterotrimers with SecE and SecG subunits (Potential). Component of the accessory SecA2/SecY2 protein translocase complex required to export cell wall protein GspB.

The protein localises to the cell membrane. Its function is as follows. The central subunit of a protein translocation channel (Potential). Part of the accessory SecA2/SecY2 system specifically required to export GspB, a serine-rich repeat cell wall protein encoded upstream in the same operon. In Streptococcus gordonii, this protein is Accessory Sec system protein translocase subunit SecY2.